The sequence spans 383 residues: tRNA-specific 2-thiouridylase MnmA (383 aa).

Residues 9-16 (GMSGGVDS) and M35 each bind ATP. The tract at residues 95-97 (NPD) is interaction with target base in tRNA. C100 acts as the Nucleophile in catalysis. C100 and C196 are joined by a disulfide. Residue G124 participates in ATP binding. The tract at residues 146–148 (KDQ) is interaction with tRNA. C196 serves as the catalytic Cysteine persulfide intermediate. The tract at residues 308 to 309 (RY) is interaction with tRNA.

It belongs to the MnmA/TRMU family.

The protein localises to the cytoplasm. It catalyses the reaction S-sulfanyl-L-cysteinyl-[protein] + uridine(34) in tRNA + AH2 + ATP = 2-thiouridine(34) in tRNA + L-cysteinyl-[protein] + A + AMP + diphosphate + H(+). Its function is as follows. Catalyzes the 2-thiolation of uridine at the wobble position (U34) of tRNA, leading to the formation of s(2)U34. This is tRNA-specific 2-thiouridylase MnmA from Burkholderia pseudomallei (strain 1106a).